A 215-amino-acid polypeptide reads, in one-letter code: Pyrrolidone-carboxylate peptidase (215 aa).

Catalysis depends on residues Glu-78, Cys-141, and His-165.

This sequence belongs to the peptidase C15 family. As to quaternary structure, homotetramer.

The protein resides in the cytoplasm. The enzyme catalyses Release of an N-terminal pyroglutamyl group from a polypeptide, the second amino acid generally not being Pro.. Functionally, removes 5-oxoproline from various penultimate amino acid residues except L-proline. In Streptococcus pyogenes serotype M12 (strain MGAS2096), this protein is Pyrrolidone-carboxylate peptidase.